We begin with the raw amino-acid sequence, 177 residues long: Ribulose bisphosphate carboxylase small subunit, chloroplastic 3 (177 aa).

The N-terminal 56 residues, 1 to 56 (MASSMMASTAAAVARAGPAQSSMVPFNACRSSVPFPATRKANNNLSTLPGNGGRVS), are a transit peptide targeting the chloroplast.

It belongs to the RuBisCO small chain family. As to quaternary structure, heterohexadecamer of 8 large and 8 small subunits.

Its subcellular location is the plastid. The protein localises to the chloroplast. Its function is as follows. RuBisCO catalyzes two reactions: the carboxylation of D-ribulose 1,5-bisphosphate, the primary event in carbon dioxide fixation, as well as the oxidative fragmentation of the pentose substrate. Both reactions occur simultaneously and in competition at the same active site. Although the small subunit is not catalytic it is essential for maximal activity. This is Ribulose bisphosphate carboxylase small subunit, chloroplastic 3 from Lemna gibba (Swollen duckweed).